The chain runs to 808 residues: Putative dimethyl sulfoxide reductase chain YnfE (808 aa).

Residues 1 to 43 constitute a signal peptide (tat-type signal); the sequence is MSKNERMVGISRRTLVKSTAIGSLALAAGGFSLPFTLRNAAAA. Positions 49-110 constitute a 4Fe-4S Mo/W bis-MGD-type domain; sequence EKVVWGACSV…SIRRRINHPD (62 aa). Residues cysteine 56, cysteine 60, cysteine 64, and cysteine 96 each coordinate [4Fe-4S] cluster. Serine 196 contacts Mo-bis(molybdopterin guanine dinucleotide).

The protein belongs to the prokaryotic molybdopterin-containing oxidoreductase family. Requires [4Fe-4S] cluster as cofactor. It depends on Mo-bis(molybdopterin guanine dinucleotide) as a cofactor. Post-translationally, exported by the Tat system. The position of the signal peptide cleavage has not been experimentally proven.

The protein localises to the cell membrane. In terms of biological role, terminal reductase during anaerobic growth on various sulfoxide and N-oxide compounds. This is Putative dimethyl sulfoxide reductase chain YnfE (ynfE) from Escherichia coli (strain K12).